Consider the following 223-residue polypeptide: Family of serine hydrolases 2 (223 aa).

Catalysis depends on charge relay system residues Ser-110, Asp-174, and His-203.

The protein belongs to the AB hydrolase 3 family.

Its subcellular location is the cytoplasm. In terms of biological role, serine hydrolase of unknown specificity. The polypeptide is Family of serine hydrolases 2 (FSH2) (Saccharomyces cerevisiae (strain ATCC 204508 / S288c) (Baker's yeast)).